The primary structure comprises 389 residues: Pyruvate synthase subunit PorA (389 aa).

Heterotetramer of one alpha, one beta, one delta and one gamma chain.

The catalysed reaction is 2 oxidized [2Fe-2S]-[ferredoxin] + pyruvate + CoA = 2 reduced [2Fe-2S]-[ferredoxin] + acetyl-CoA + CO2 + H(+). This Methanocaldococcus jannaschii (strain ATCC 43067 / DSM 2661 / JAL-1 / JCM 10045 / NBRC 100440) (Methanococcus jannaschii) protein is Pyruvate synthase subunit PorA (porA).